Reading from the N-terminus, the 100-residue chain is Small ribosomal subunit protein uS14 (100 aa).

The protein belongs to the universal ribosomal protein uS14 family. Part of the 30S ribosomal subunit. Contacts proteins S3 and S10.

Its function is as follows. Binds 16S rRNA, required for the assembly of 30S particles and may also be responsible for determining the conformation of the 16S rRNA at the A site. In Trichodesmium erythraeum (strain IMS101), this protein is Small ribosomal subunit protein uS14.